A 622-amino-acid polypeptide reads, in one-letter code: Membrane protein insertase YidC (622 aa).

The helical transmembrane segment at F6–L26 threads the bilayer. The segment at A37–S71 is disordered. 4 helical membrane passes run L413–F433, L483–F503, M513–F533, and V579–W599.

The protein belongs to the OXA1/ALB3/YidC family. Type 1 subfamily. Interacts with the Sec translocase complex via SecD. Specifically interacts with transmembrane segments of nascent integral membrane proteins during membrane integration.

The protein resides in the cell inner membrane. Functionally, required for the insertion and/or proper folding and/or complex formation of integral membrane proteins into the membrane. Involved in integration of membrane proteins that insert both dependently and independently of the Sec translocase complex, as well as at least some lipoproteins. Aids folding of multispanning membrane proteins. This is Membrane protein insertase YidC from Treponema pallidum (strain Nichols).